The chain runs to 478 residues: Calcium/calmodulin-dependent protein kinase type II subunit alpha (478 aa).

Phosphotyrosine is present on Tyr13. The Protein kinase domain occupies Tyr13–Ile271. Residues Leu19–Val27 and Lys42 each bind ATP. The active-site Proton acceptor is Asp135. The residue at position 257 (Ser257) is a Phosphoserine. Thr286 is modified (phosphothreonine; by autocatalysis). Positions Leu290–Lys300 are calmodulin-binding. The interval Thr310–Gly320 is interaction with BAALC. The segment at Ser314–Glu341 is disordered. Over residues Lys322–Ser331 the composition is skewed to basic and acidic residues. Ser330, Ser331, and Ser333 each carry phosphoserine. Phosphothreonine occurs at positions 336 and 337. Ser404 carries the phosphoserine modification.

This sequence belongs to the protein kinase superfamily. CAMK Ser/Thr protein kinase family. CaMK subfamily. In terms of assembly, there are 4 genes encoding calcium/calmodulin-dependent protein kinase type II chains: CAMK2A, CAMK2B, CAMK2G and CAMK2D. The corresponding proteins assemble into homo- or heteromultimeric holoenzymes composed of 12 subunits with two hexameric rings stacked one on top of the other. Interacts with BAALC. Interacts with MPDZ. Interacts with SYN1. Interacts with CAMK2N2. Interacts with SYNGAP1. Interacts with SYNPO2. Interacts with SHANK3. Interacts with GRIN2B. Interacts with CACNB2. Interacts with LRRC7. Interacts with GRM5. Interacts with DAGLA (via C-terminal); this interaction is enhanced by autophosphorylation of CAMK2A at Thr-286. Interacts with CAMK2N1; this interaction requires CAMK2A activation by Ca(2+). The cofactor is Mg(2+). Autophosphorylation of Thr-286 following activation by Ca(2+)/calmodulin. Phosphorylation of Thr-286 locks the kinase into an activated state. Post-translationally, palmitoylated. Probably palmitoylated by ZDHHC3 and ZDHHC7.

The protein resides in the synapse. It is found in the postsynaptic density. Its subcellular location is the cell projection. It localises to the dendritic spine. The protein localises to the dendrite. The enzyme catalyses L-seryl-[protein] + ATP = O-phospho-L-seryl-[protein] + ADP + H(+). It carries out the reaction L-threonyl-[protein] + ATP = O-phospho-L-threonyl-[protein] + ADP + H(+). With respect to regulation, activated by Ca(2+)/calmodulin. Binding of calmodulin results in conformational change that relieves intrasteric autoinhibition and allows autophosphorylation of Thr-286 which turns the kinase in a constitutively active form and confers to the kinase a Ca(2+)-independent activity. Its function is as follows. Calcium/calmodulin-dependent protein kinase that functions autonomously after Ca(2+)/calmodulin-binding and autophosphorylation, and is involved in various processes, such as synaptic plasticity, neurotransmitter release and long-term potentiation. Member of the NMDAR signaling complex in excitatory synapses, it regulates NMDAR-dependent potentiation of the AMPAR and therefore excitatory synaptic transmission. Regulates dendritic spine development. Also regulates the migration of developing neurons. Phosphorylates the transcription factor FOXO3 to activate its transcriptional activity. Phosphorylates the transcription factor ETS1 in response to calcium signaling, thereby decreasing ETS1 affinity for DNA. In response to interferon-gamma (IFN-gamma) stimulation, catalyzes phosphorylation of STAT1, stimulating the JAK-STAT signaling pathway. In response to interferon-beta (IFN-beta) stimulation, stimulates the JAK-STAT signaling pathway. Acts as a negative regulator of 2-arachidonoylglycerol (2-AG)-mediated synaptic signaling via modulation of DAGLA activity. The chain is Calcium/calmodulin-dependent protein kinase type II subunit alpha (CAMK2A) from Pongo abelii (Sumatran orangutan).